The chain runs to 381 residues: Putative 2-heptyl-3-hydroxy-4(1H)-quinolone synthase AqdB1 (381 aa).

It belongs to the 3-hydroxybenzoate 6-hydroxylase family.

It catalyses the reaction 2-heptyl-4(1H)-quinolone + NADH + O2 + H(+) = 2-heptyl-3-hydroxy-4(1H)-quinolone + NAD(+) + H2O. Its function is as follows. Could be involved in the degradation of the Pseudomonas aeruginosa quorum sensing signal molecule HHQ (2-heptyl-4-quinolone) to anthranilic acid. May catalyze the hydroxylation of HHQ to PQS (2-heptyl-3-hydroxy-4-quinolone). This chain is Putative 2-heptyl-3-hydroxy-4(1H)-quinolone synthase AqdB1, found in Rhodococcus erythropolis (Arthrobacter picolinophilus).